Consider the following 297-residue polypeptide: Probable endonuclease 4 (297 aa).

Zn(2+)-binding residues include H68, H109, E144, D178, H181, H213, D226, H228, and E258.

It belongs to the AP endonuclease 2 family. Zn(2+) serves as cofactor.

The enzyme catalyses Endonucleolytic cleavage to 5'-phosphooligonucleotide end-products.. Endonuclease IV plays a role in DNA repair. It cleaves phosphodiester bonds at apurinic or apyrimidinic (AP) sites, generating a 3'-hydroxyl group and a 5'-terminal sugar phosphate. The polypeptide is Probable endonuclease 4 (Enterococcus faecalis (strain ATCC 700802 / V583)).